A 302-amino-acid chain; its full sequence is Pantothenate synthetase 4 (302 aa).

ATP is bound at residue 51-58 (MGALHEGH). H58 (proton donor) is an active-site residue. Q82 provides a ligand contact to (R)-pantoate. A beta-alanine-binding site is contributed by Q82. 166-169 (GRKD) lines the ATP pocket. Q172 serves as a coordination point for (R)-pantoate. ATP-binding positions include A195 and 203–206 (RSSR).

Belongs to the pantothenate synthetase family. In terms of assembly, homodimer.

The protein localises to the cytoplasm. It carries out the reaction (R)-pantoate + beta-alanine + ATP = (R)-pantothenate + AMP + diphosphate + H(+). Its pathway is cofactor biosynthesis; (R)-pantothenate biosynthesis; (R)-pantothenate from (R)-pantoate and beta-alanine: step 1/1. Functionally, catalyzes the condensation of pantoate with beta-alanine in an ATP-dependent reaction via a pantoyl-adenylate intermediate. This is Pantothenate synthetase 4 from Frankia alni (strain DSM 45986 / CECT 9034 / ACN14a).